The primary structure comprises 64 residues: MPKMKTNKGAAKRFKKTAGGIKYKHATKRHILTKRTTKNKRQLRPNALLPRCEVAAVVRMLPYA.

Belongs to the bacterial ribosomal protein bL35 family.

The sequence is that of Large ribosomal subunit protein bL35 from Vibrio campbellii (strain ATCC BAA-1116).